A 206-amino-acid chain; its full sequence is Large ribosomal subunit protein uL4 (206 aa).

A disordered region spans residues 45-76; it reads RQGTQSAKTRTEVSGGGIKPWRQKGTGRARQG.

The protein belongs to the universal ribosomal protein uL4 family. In terms of assembly, part of the 50S ribosomal subunit.

One of the primary rRNA binding proteins, this protein initially binds near the 5'-end of the 23S rRNA. It is important during the early stages of 50S assembly. It makes multiple contacts with different domains of the 23S rRNA in the assembled 50S subunit and ribosome. Its function is as follows. Forms part of the polypeptide exit tunnel. The polypeptide is Large ribosomal subunit protein uL4 (Clostridium acetobutylicum (strain ATCC 824 / DSM 792 / JCM 1419 / IAM 19013 / LMG 5710 / NBRC 13948 / NRRL B-527 / VKM B-1787 / 2291 / W)).